The chain runs to 259 residues: Secretion system apparatus protein SsaT (259 aa).

The next 6 helical transmembrane spans lie at 9–29, 35–55, 78–98, 127–147, 185–205, and 214–234; these read LIALAVAFIRPLSLSLLLPLL, GAALLRNGVLMSLTFPILPII, VIIGFSIGFCAAVPFWAVDMA, LLFSQFLCVIFFISGGMEFIL, ISFSLPAIICMVLADLALGLL, and VFFFSMPLKSILVLLTLLISF.

It belongs to the FliR/MopE/SpaR family.

It localises to the cell membrane. In terms of biological role, part of a type III secretion system. In Salmonella typhimurium (strain LT2 / SGSC1412 / ATCC 700720), this protein is Secretion system apparatus protein SsaT (ssaT).